The sequence spans 255 residues: Putative ankyrin repeat protein R880 (255 aa).

ANK repeat units lie at residues Ser79–Tyr109, Lys110–Thr139, Asp141–Lys169, Arg171–Ser199, and Lys201–Val229.

This chain is Putative ankyrin repeat protein R880, found in Acanthamoeba polyphaga (Amoeba).